The following is a 218-amino-acid chain: 1-Cys peroxiredoxin PER1 (218 aa).

The region spanning 4–164 is the Thioredoxin domain; that stretch reads LTIGDTVPNL…VVRAVDSLLT (161 aa). Cys46 (cysteine sulfenic acid (-SOH) intermediate) is an active-site residue. Residues 194-217 carry the Bipartite nuclear localization signal motif; it reads KKMFPQGFETADLPSKKGYLRFTK.

The protein belongs to the peroxiredoxin family. Prx6 subfamily. Embryo and aleurone cells.

It localises to the nucleus. The protein resides in the cytoplasm. The catalysed reaction is a hydroperoxide + [thioredoxin]-dithiol = an alcohol + [thioredoxin]-disulfide + H2O. Its function is as follows. Thiol-specific peroxidase that catalyzes the reduction of hydrogen peroxide and organic hydroperoxides to water and alcohols, respectively. Seems to contribute to the inhibition of germination during stress. The sequence is that of 1-Cys peroxiredoxin PER1 (PER1) from Hordeum vulgare (Barley).